The following is a 1366-amino-acid chain: DNA-directed RNA polymerase subunit beta' (1366 aa).

The interval Met1 to Arg40 is disordered. Residues Lys7–Lys24 show a composition bias toward basic residues. Residues Gln25–Ser38 are compositionally biased toward polar residues. Cys250, Cys317, Cys324, and Cys327 together coordinate Zn(2+). The tract at residues Thr1299–Glu1366 is disordered. Over residues Ala1353–Glu1366 the composition is skewed to low complexity.

Belongs to the RNA polymerase beta' chain family. RpoC2 subfamily. In terms of assembly, in cyanobacteria the RNAP catalytic core is composed of 2 alpha, 1 beta, 1 beta', 1 gamma and 1 omega subunit. When a sigma factor is associated with the core the holoenzyme is formed, which can initiate transcription. The cofactor is Zn(2+).

The enzyme catalyses RNA(n) + a ribonucleoside 5'-triphosphate = RNA(n+1) + diphosphate. DNA-dependent RNA polymerase catalyzes the transcription of DNA into RNA using the four ribonucleoside triphosphates as substrates. In Prochlorococcus marinus (strain MIT 9211), this protein is DNA-directed RNA polymerase subunit beta'.